A 361-amino-acid polypeptide reads, in one-letter code: Beta-hexosaminidase (361 aa).

Substrate contacts are provided by residues aspartate 69, arginine 77, arginine 144, and 174 to 175 (KH). The active-site Proton donor/acceptor is the histidine 187. The active-site Nucleophile is the aspartate 258.

Belongs to the glycosyl hydrolase 3 family. NagZ subfamily.

The protein resides in the cytoplasm. It carries out the reaction Hydrolysis of terminal non-reducing N-acetyl-D-hexosamine residues in N-acetyl-beta-D-hexosaminides.. The protein operates within cell wall biogenesis; peptidoglycan recycling. Plays a role in peptidoglycan recycling by cleaving the terminal beta-1,4-linked N-acetylglucosamine (GlcNAc) from peptide-linked peptidoglycan fragments, giving rise to free GlcNAc, anhydro-N-acetylmuramic acid and anhydro-N-acetylmuramic acid-linked peptides. This is Beta-hexosaminidase from Neisseria meningitidis serogroup C / serotype 2a (strain ATCC 700532 / DSM 15464 / FAM18).